Here is a 171-residue protein sequence, read N- to C-terminus: Glutathione peroxidase-like peroxiredoxin GPX3 (171 aa).

The active-site Cysteine sulfenic acid (-SOH) intermediate is Cys-43. A disulfide bridge links Cys-43 with Cys-89.

The protein belongs to the glutathione peroxidase family. In terms of assembly, interacts with CAP1 and probably YBP1.

It catalyses the reaction a hydroperoxide + [thioredoxin]-dithiol = an alcohol + [thioredoxin]-disulfide + H2O. Functionally, involved in oxidative stress response and redox homeostasis. Functions as a sensor and transducer of hydroperoxide stress. In response to hydroperoxide stress it oxidizes (activates) the transcription activator CAP1, which is involved in transcription activation of genes of the oxidative stress response pathway. May also play a direct role in hydroperoxide scavenging. The enzyme is not required for the glutaredoxin-mediated antioxidant function. In the presence of peroxides, GPX3 is directly oxidized at Cys-43 to form a cysteine sulfenic acid (-SOH). Cys-43-SOH then forms either an intramolecular disulfide bond (Cys-43 with Cys-89) or a transient, intermolecular disulfide bond with 'Cys-446' of CAP1, which is further resolved into a CAP1 intramolecular disulfide bond ('Cys-303' with 'Cys-598'), which causes its nuclear accumulation and activation, and a reduced Cys-43 in GPX3. Required for C.albicans-mediated macrophage killing. This chain is Glutathione peroxidase-like peroxiredoxin GPX3, found in Candida albicans (strain SC5314 / ATCC MYA-2876) (Yeast).